Reading from the N-terminus, the 188-residue chain is MKVIIAATLLGILMHAFAEECELMPPGDNFDLEKYFSIPHVYVTHSRNGPKEQVCREYKTTKNSDGTTTTLVTSDYKTGGKPYHSELKCTNTPKSGVKGQFSVECEVPNGNGGKKKIHVETSVIATDYKNYALLQSCTKTESGIADDVLLLQTKKEGVDPGVTSVLKSVNWSLDDWFSRSKVNCDNMK.

Positions 1–18 (MKVIIAATLLGILMHAFA) are cleaved as a signal peptide. 3 disulfides stabilise this stretch: cysteine 21–cysteine 137, cysteine 55–cysteine 184, and cysteine 89–cysteine 105.

Belongs to the calycin superfamily. Triabin family. As to expression, expressed in salivary glands.

The protein localises to the secreted. Functionally, has been described as a specific inhibitor of collagen-induced platelet aggregation. However, as it does not affect platelet shape change or adhesion, it is plausible that it exerts its antiplatelet activity by a mechanism similar to that of triplatin, moubatin and dipetalodipin as scavenging eicosanoids involved in inflammation such as thromboxane A2 (TXA2). This chain is Pallidipin, found in Meccus pallidipennis (Triatomine bug).